The primary structure comprises 258 residues: Small ribosomal subunit protein uS15m (258 aa).

Residues 1–57 (MLRAAWRALSSVRAQAVTRAPVPALRGGSSASLLSARCGLQPPSLLRAARAYAAVQK) constitute a mitochondrion transit peptide. Residues 229–258 (KAAAAAAKKEKNEGVPENPSNAVPEKTQVN) are disordered.

This sequence belongs to the universal ribosomal protein uS15 family. In terms of assembly, component of the mitochondrial ribosome small subunit (28S) which comprises a 12S rRNA and about 30 distinct proteins. Interacts with METTL17.

It localises to the mitochondrion matrix. This chain is Small ribosomal subunit protein uS15m (Mrps15), found in Mus musculus (Mouse).